A 290-amino-acid chain; its full sequence is Bifunctional protein FolD 1 (290 aa).

NADP(+)-binding positions include 172-174 (GAS) and I238.

It belongs to the tetrahydrofolate dehydrogenase/cyclohydrolase family. In terms of assembly, homodimer.

The catalysed reaction is (6R)-5,10-methylene-5,6,7,8-tetrahydrofolate + NADP(+) = (6R)-5,10-methenyltetrahydrofolate + NADPH. It catalyses the reaction (6R)-5,10-methenyltetrahydrofolate + H2O = (6R)-10-formyltetrahydrofolate + H(+). The protein operates within one-carbon metabolism; tetrahydrofolate interconversion. Its function is as follows. Catalyzes the oxidation of 5,10-methylenetetrahydrofolate to 5,10-methenyltetrahydrofolate and then the hydrolysis of 5,10-methenyltetrahydrofolate to 10-formyltetrahydrofolate. This Pseudomonas putida (strain GB-1) protein is Bifunctional protein FolD 1.